The following is a 453-amino-acid chain: CAAX prenyl protease 1 (453 aa).

Residues 1–12 are Lumenal-facing; sequence MFDLKTILDHPN. The chain crosses the membrane as a helical span at residues 13 to 33; it reads IPWKLIISGFSIAQFSFESYL. Residues 34-89 lie on the Cytoplasmic side of the membrane; that stretch reads TYRQYQKLSETKLPPVLEDEIDDETFHKSRNYSRAKAKFSIFGDVYNLAQKLVFIK. The helical transmembrane segment at 90–110 threads the bilayer; sequence YDLFPKIWHMAVSLLNAVLPV. Topologically, residues 111-121 are lumenal; that stretch reads RFHMVSTVAQS. Residues 122–142 traverse the membrane as a helical segment; it reads LCFLGLLSSLSTLVDLPLSYY. Over 143 to 167 the chain is Cytoplasmic; the sequence is SHFVLEEKFGFNKLTVQLWITDMIK. The chain crosses the membrane as a helical span at residues 168–188; it reads SLTLAYAIGGPILYLFLKIFD. Residues 189-197 are Lumenal-facing; the sequence is KFPTDFLWY. The chain crosses the membrane as a helical span at residues 198 to 218; that stretch reads IMVFLFVVQILAMTIIPVFIM. Over 219 to 306 the chain is Cytoplasmic; it reads PMFNKFTPLE…HEIGHWQKNH (88 aa). Histidine 297 contributes to the Zn(2+) binding site. Glutamate 298 is an active-site residue. Histidine 301 is a binding site for Zn(2+). Residues 307–327 traverse the membrane as a helical segment; it reads IVNMVIFSQLHTFLIFSLFTS. Topologically, residues 328–357 are lumenal; the sequence is IYRNTSFYNTFGFFLEKSTGSFVDPVITKE. The helical transmembrane segment at 358–378 threads the bilayer; it reads FPIIIGFMLFNDLLTPLECAM. Over 379–453 the chain is Cytoplasmic; that stretch reads QFVMSLISRT…LDYVSEKKKN (75 aa). Glutamate 390 lines the Zn(2+) pocket. The Proton donor role is filled by aspartate 394.

This sequence belongs to the peptidase M48A family. Zn(2+) serves as cofactor.

The protein localises to the endoplasmic reticulum membrane. It carries out the reaction Hydrolyzes the peptide bond -P2-(S-farnesyl or geranylgeranyl)C-P1'-P2'-P3'-COOH where P1' and P2' are amino acids with aliphatic side chains and P3' is any C-terminal residue.. Functionally, proteolytically removes the C-terminal three residues of farnesylated A-factor mating pheromone. Also acts to cleave the N-terminal extension of the pheromone. Does not act on Ras. The protein is CAAX prenyl protease 1 (STE24) of Saccharomyces cerevisiae (strain ATCC 204508 / S288c) (Baker's yeast).